The primary structure comprises 142 residues: Probable pilin MJ0832.1 (142 aa).

Residues 1-8 constitute a propeptide that is removed on maturation; that stretch reads MLKFRKRG. The short motif at 9-17 is the QXSXEXXXL element; sequence QISLEFSLL.

Post-translationally, the N-terminus is cleaved by the prepilin peptidase EppA, which recognizes the class III signal sequence.

It localises to the secreted. It is found in the cell surface. Its subcellular location is the fimbrium. In Methanocaldococcus jannaschii (strain ATCC 43067 / DSM 2661 / JAL-1 / JCM 10045 / NBRC 100440) (Methanococcus jannaschii), this protein is Probable pilin MJ0832.1.